The primary structure comprises 174 residues: RNA pyrophosphohydrolase (174 aa).

In terms of domain architecture, Nudix hydrolase spans 6 to 149 (GFRANVGIII…KRDVYRKVMK (144 aa)). The Nudix box motif lies at 38–59 (GGVDDGETAEEAMYRELYEEVG).

Belongs to the Nudix hydrolase family. RppH subfamily. A divalent metal cation is required as a cofactor.

Functionally, accelerates the degradation of transcripts by removing pyrophosphate from the 5'-end of triphosphorylated RNA, leading to a more labile monophosphorylated state that can stimulate subsequent ribonuclease cleavage. The protein is RNA pyrophosphohydrolase of Shewanella baltica (strain OS223).